Consider the following 440-residue polypeptide: MAEYDLTKRMAPFFDLHLVIPLLEFIEPRSIYDHDSLIKVHRRVLLKTNMIDSVIETYPEGEVPKELEQRKVEILSQREKLKVKVDPVVEILESEPVKAMMDSRELTNNRILEYVTANHGLTEEMLDSLFRYAKFQYECGNYSAASLCLDYYRNIVPQQNPNYLSALYGKLASEILLQEWTHAKDDLTKLRTYIDFNPFDTELESVQQRAWLMHWALFVYFNYPKGRDEIVEMYLNQQPYLNTIQIACPHLLRYLAVAVVTSKTKQKNSLKDLIKVIDIERHNYEXPVTXFLTCLYIKYDFDEAQKKVEEVLSNDFFLTACLEDFRESARLLIFEMFCRIHQCISIQMLAERLNMQQVEAERWIVDLIRTYRIDGAKIDSKLGQVVMGAKTTSVHEQVMENTKRLTFRAQQIALQLEKMKLDKKVCIILNFIYCEDFRNF.

The PCI domain occupies 219-392 (VYFNYPKGRD…GQVVMGAKTT (174 aa)).

This sequence belongs to the eIF-3 subunit E family. As to quaternary structure, component of the eukaryotic translation initiation factor 3 (eIF-3) complex.

Its subcellular location is the cytoplasm. Functionally, component of the eukaryotic translation initiation factor 3 (eIF-3) complex, which is involved in protein synthesis of a specialized repertoire of mRNAs and, together with other initiation factors, stimulates binding of mRNA and methionyl-tRNAi to the 40S ribosome. The eIF-3 complex specifically targets and initiates translation of a subset of mRNAs involved in cell proliferation. In Brugia malayi (Filarial nematode worm), this protein is Eukaryotic translation initiation factor 3 subunit E.